A 283-amino-acid chain; its full sequence is Cyclin-C (283 aa).

The Cyclin N-terminal domain maps to 20–151 (DLLKERQKDL…LLELMDCCLI (132 aa)). The tract at residues 252-283 (TILSKMPKPKPPPNSEGEQGPNGSQNSSYSQS) is disordered. The segment covering 272 to 283 (PNGSQNSSYSQS) has biased composition (polar residues). Serine 275 bears the Phosphoserine mark.

This sequence belongs to the cyclin family. Cyclin C subfamily. Component of the Mediator complex, which is composed of MED1, MED4, MED6, MED7, MED8, MED9, MED10, MED11, MED12, MED13, MED13L, MED14, MED15, MED16, MED17, MED18, MED19, MED20, MED21, MED22, MED23, MED24, MED25, MED26, MED27, MED29, MED30, MED31, CCNC, CDK8 and CDC2L6/CDK11. The MED12, MED13, CCNC and CDK8 subunits form a distinct module termed the CDK8 module. Mediator containing the CDK8 module is less active than Mediator lacking this module in supporting transcriptional activation. Individual preparations of the Mediator complex lacking one or more distinct subunits have been variously termed ARC, CRSP, DRIP, PC2, SMCC and TRAP. The cylin/CDK pair formed by CCNC/CDK8 also associates with the large subunit of RNA polymerase II.

Its subcellular location is the nucleus. In terms of biological role, component of the Mediator complex, a coactivator involved in regulated gene transcription of nearly all RNA polymerase II-dependent genes. Mediator functions as a bridge to convey information from gene-specific regulatory proteins to the basal RNA polymerase II transcription machinery. Mediator is recruited to promoters by direct interactions with regulatory proteins and serves as a scaffold for the assembly of a functional preinitiation complex with RNA polymerase II and the general transcription factors. Binds to and activates cyclin-dependent kinase CDK8 that phosphorylates the CTD (C-terminal domain) of the large subunit of RNA polymerase II (RNAp II), which may inhibit the formation of a transcription initiation complex. The sequence is that of Cyclin-C (Ccnc) from Mus musculus (Mouse).